Reading from the N-terminus, the 703-residue chain is Polyribonucleotide nucleotidyltransferase (703 aa).

Mg(2+) contacts are provided by Asp-489 and Asp-495. One can recognise a KH domain in the interval 556 to 615 (PTMIAMKIDTDKIRDVIGKGGATIRAICEETKASIDIEDDGSIKIFGETKEAAEAARQRV). Residues 625 to 693 (GKIYVGKVER…NRGRIKLSIK (69 aa)) form the S1 motif domain.

This sequence belongs to the polyribonucleotide nucleotidyltransferase family. In terms of assembly, component of the RNA degradosome, which is a multiprotein complex involved in RNA processing and mRNA degradation. It depends on Mg(2+) as a cofactor.

Its subcellular location is the cytoplasm. It carries out the reaction RNA(n+1) + phosphate = RNA(n) + a ribonucleoside 5'-diphosphate. In terms of biological role, involved in mRNA degradation. Catalyzes the phosphorolysis of single-stranded polyribonucleotides processively in the 3'- to 5'-direction. This Pseudomonas fluorescens (strain ATCC BAA-477 / NRRL B-23932 / Pf-5) protein is Polyribonucleotide nucleotidyltransferase.